The following is a 124-amino-acid chain: Small ribosomal subunit protein bS6 (124 aa).

Residues 101–124 (IMMKEVQREEARKSAQSDAPAVAA) form a disordered region. Over residues 105–115 (EVQREEARKSA) the composition is skewed to basic and acidic residues.

Belongs to the bacterial ribosomal protein bS6 family.

Binds together with bS18 to 16S ribosomal RNA. The protein is Small ribosomal subunit protein bS6 of Polynucleobacter asymbioticus (strain DSM 18221 / CIP 109841 / QLW-P1DMWA-1) (Polynucleobacter necessarius subsp. asymbioticus).